The primary structure comprises 466 residues: 3-isopropylmalate dehydratase large subunit (466 aa).

3 residues coordinate [4Fe-4S] cluster: cysteine 347, cysteine 407, and cysteine 410.

The protein belongs to the aconitase/IPM isomerase family. LeuC type 1 subfamily. In terms of assembly, heterodimer of LeuC and LeuD. The cofactor is [4Fe-4S] cluster.

It carries out the reaction (2R,3S)-3-isopropylmalate = (2S)-2-isopropylmalate. It functions in the pathway amino-acid biosynthesis; L-leucine biosynthesis; L-leucine from 3-methyl-2-oxobutanoate: step 2/4. Catalyzes the isomerization between 2-isopropylmalate and 3-isopropylmalate, via the formation of 2-isopropylmaleate. In Shewanella loihica (strain ATCC BAA-1088 / PV-4), this protein is 3-isopropylmalate dehydratase large subunit.